We begin with the raw amino-acid sequence, 445 residues long: Homoserine dehydrogenase (445 aa).

The NADPH site is built by Phe-26, Thr-28, and Val-29. Residues Val-29 and Ala-58 each coordinate NAD(+). Position 29 (Val-29) interacts with NADP(+). Lys-119 provides a ligand contact to NADPH. Lys-119 provides a ligand contact to NADP(+). Na(+) is bound by residues Glu-143, Val-146, Gly-148, and Ile-150. Gly-201 and Glu-204 together coordinate NADP(+). The L-homoserine site is built by Glu-204 and Asp-215. Lys-219 serves as the catalytic Proton donor. Residue Gly-321 coordinates NADPH. Gly-321 lines the NAD(+) pocket. An NADP(+)-binding site is contributed by Gly-321. The ACT domain maps to 368 to 445 (HLDMDVEDRV…INSVIRLERD (78 aa)).

It belongs to the homoserine dehydrogenase family. A metal cation is required as a cofactor.

It catalyses the reaction L-homoserine + NADP(+) = L-aspartate 4-semialdehyde + NADPH + H(+). The catalysed reaction is L-homoserine + NAD(+) = L-aspartate 4-semialdehyde + NADH + H(+). Its pathway is amino-acid biosynthesis; L-methionine biosynthesis via de novo pathway; L-homoserine from L-aspartate: step 3/3. The protein operates within amino-acid biosynthesis; L-threonine biosynthesis; L-threonine from L-aspartate: step 3/5. Its activity is regulated as follows. Feedback inhibition by threonine. Catalyzes the conversion of L-aspartate-beta-semialdehyde (L-Asa) to L-homoserine (L-Hse), the third step in the biosynthesis of threonine and methionine from aspartate. This Corynebacterium glutamicum (strain ATCC 13032 / DSM 20300 / JCM 1318 / BCRC 11384 / CCUG 27702 / LMG 3730 / NBRC 12168 / NCIMB 10025 / NRRL B-2784 / 534) protein is Homoserine dehydrogenase (hom).